The sequence spans 116 residues: Ly-6/neurotoxin-like protein 1 (116 aa).

An N-terminal signal peptide occupies residues 1-20; it reads MTPLLTLFLVALIGLPLAQA. Residues 21–105 enclose the UPAR/Ly6 domain; that stretch reads LDCHVCAYNG…FAAPATLALA (85 aa). Cystine bridges form between cysteine 23–cysteine 46, cysteine 26–cysteine 33, cysteine 39–cysteine 64, cysteine 68–cysteine 85, and cysteine 86–cysteine 91. Asparagine 92 carries the GPI-anchor amidated asparagine lipid modification. Residues 93-116 constitute a propeptide, removed in mature form; it reads GAGFAAPATLALAPILLATLWGLL.

As to quaternary structure, interacts with nAChRs containing alpha-4:beta-2 (CHRNA4:CHRNB2) and alpha-7 (CHRNA7) subunits. Interacts with CHRNA4 probably in the endoplasmic reticulum prior to nAChR pentameric assembly. Interacts with KCNA2/Potassium voltage-gated channel subfamily A member 2.

Its subcellular location is the cell membrane. It is found in the cell projection. It localises to the dendrite. The protein resides in the endoplasmic reticulum. Acts in different tissues through interaction to nicotinic acetylcholine receptors (nAChRs). The proposed role as modulator of nAChR activity seems to be dependent on the nAChR subtype and stoichiometry, and to involve an effect on nAChR trafficking and its cell surface expression, and on single channel properties of the nAChR inserted in the plasma membrane. Modulates functional properties of nicotinic acetylcholine receptors (nAChRs) to prevent excessive excitation, and hence neurodegeneration. Enhances desensitization by increasing both the rate and extent of desensitization of alpha-4:beta-2-containing nAChRs and slowing recovery from desensitization. Promotes large amplitude ACh-evoked currents through alpha-4:beta-2 nAChRs. Is involved in regulation of the nAChR pentameric assembly in the endoplasmic reticulum. Shifts stoichiometry from high sensitivity alpha-4(2):beta-2(3) to low sensitivity alpha-4(3):beta-2(2) nAChR. In vitro modulates alpha-3:beta-4-containing nAChRs. Reduces cell surface expression of (alpha-3:beta-4)(2):beta-4 and (alpha-3:beta-4)(2):alpha-5 nAChRs suggesting an interaction with nAChR alpha-3(-):(+)beta-4 subunit interfaces and an allosteric mode. Corresponding single channel effects characterized by decreased unitary conductance, altered burst proportions and enhanced desensitization/inactivation seem to depend on nAChR alpha:alpha subunit interfaces and are greater in (alpha-3:beta-2)(2):alpha-3 when compared to (alpha-3:beta-2)(2):alpha-5 nAChRs. Prevents plasticity in the primary visual cortex late in life. In Saimiri boliviensis boliviensis (Bolivian squirrel monkey), this protein is Ly-6/neurotoxin-like protein 1.